The chain runs to 77 residues: Large ribosomal subunit protein bL28 (77 aa).

This sequence belongs to the bacterial ribosomal protein bL28 family.

This is Large ribosomal subunit protein bL28 from Ralstonia pickettii (strain 12J).